Consider the following 216-residue polypeptide: Regulatory protein RecX (216 aa).

The protein belongs to the RecX family.

The protein localises to the cytoplasm. Its function is as follows. Modulates RecA activity. This chain is Regulatory protein RecX, found in Clostridium tetani (strain Massachusetts / E88).